A 246-amino-acid chain; its full sequence is Uridylate kinase (246 aa).

ATP is bound at residue 11–14; it reads KLSG. Glycine 53 is a binding site for UMP. ATP is bound by residues glycine 54 and arginine 58. UMP contacts are provided by residues aspartate 73 and 134–141; that span reads TGNPYFTT. Residues threonine 161, tyrosine 167, and aspartate 170 each contribute to the ATP site.

The protein belongs to the UMP kinase family. In terms of assembly, homohexamer.

It is found in the cytoplasm. It catalyses the reaction UMP + ATP = UDP + ADP. It functions in the pathway pyrimidine metabolism; CTP biosynthesis via de novo pathway; UDP from UMP (UMPK route): step 1/1. Its activity is regulated as follows. Inhibited by UTP. Functionally, catalyzes the reversible phosphorylation of UMP to UDP. In Leptospira borgpetersenii serovar Hardjo-bovis (strain JB197), this protein is Uridylate kinase.